The sequence spans 94 residues: Integration host factor subunit beta (94 aa).

This sequence belongs to the bacterial histone-like protein family. In terms of assembly, heterodimer of an alpha and a beta chain.

Its function is as follows. This protein is one of the two subunits of integration host factor, a specific DNA-binding protein that functions in genetic recombination as well as in transcriptional and translational control. In Azoarcus sp. (strain BH72), this protein is Integration host factor subunit beta.